The following is a 135-amino-acid chain: Small ribosomal subunit protein uS11 (135 aa).

Belongs to the universal ribosomal protein uS11 family. In terms of assembly, part of the 30S ribosomal subunit. Interacts with proteins S7 and S18. Binds to IF-3.

Located on the platform of the 30S subunit, it bridges several disparate RNA helices of the 16S rRNA. Forms part of the Shine-Dalgarno cleft in the 70S ribosome. This Solibacter usitatus (strain Ellin6076) protein is Small ribosomal subunit protein uS11.